The chain runs to 105 residues: ATP-dependent Clp protease adapter protein ClpS (105 aa).

Belongs to the ClpS family. As to quaternary structure, binds to the N-terminal domain of the chaperone ClpA.

Involved in the modulation of the specificity of the ClpAP-mediated ATP-dependent protein degradation. This chain is ATP-dependent Clp protease adapter protein ClpS, found in Prochlorococcus marinus (strain MIT 9515).